Here is a 510-residue protein sequence, read N- to C-terminus: NAD(P)H-quinone oxidoreductase subunit 2, chloroplastic (510 aa).

The next 13 helical transmembrane spans lie at 28–48, 57–77, 99–119, 124–144, 149–169, 183–203, 227–247, 295–315, 323–343, 354–374, 395–415, 418–438, and 484–504; these read DGSF…LLII, IPWL…TLLF, IFQF…VEYI, MALT…MFLC, LITI…LSGY, YLLM…WLYG, PGIS…LSPA, WHLL…LIAI, MLAY…IVGD, YMLF…LFGL, ALSL…AGFF, LYLF…IGLL, and MIVC…IIAI.

Belongs to the complex I subunit 2 family. In terms of assembly, NDH is composed of at least 16 different subunits, 5 of which are encoded in the nucleus.

It is found in the plastid. The protein localises to the chloroplast thylakoid membrane. It catalyses the reaction a plastoquinone + NADH + (n+1) H(+)(in) = a plastoquinol + NAD(+) + n H(+)(out). The enzyme catalyses a plastoquinone + NADPH + (n+1) H(+)(in) = a plastoquinol + NADP(+) + n H(+)(out). Functionally, NDH shuttles electrons from NAD(P)H:plastoquinone, via FMN and iron-sulfur (Fe-S) centers, to quinones in the photosynthetic chain and possibly in a chloroplast respiratory chain. The immediate electron acceptor for the enzyme in this species is believed to be plastoquinone. Couples the redox reaction to proton translocation, and thus conserves the redox energy in a proton gradient. This is NAD(P)H-quinone oxidoreductase subunit 2, chloroplastic from Silene latifolia (White campion).